The chain runs to 1587 residues: DNA topoisomerase 2 (1587 aa).

Over residues 1–15 (MSDADPFDMSDDDDN) the composition is skewed to acidic residues. The interval 1 to 47 (MSDADPFDMSDDDDNSVLSHTPPKKQKKAPTTKKGGSKPLADVENES) is disordered. Basic residues predominate over residues 22–31 (PPKKQKKAPT). ATP is bound by residues N126, N155, 183–185 (SSN), and 196–203 (GRNGFGAK). 2 interaction with DNA regions span residues 381 to 383 (KKK) and 381 to 386 (KKKNKN). 415-417 (QTK) serves as a coordination point for ATP. Positions 461-485 (MLKKTDGGRRSRMNNPKLTDANKAG) are disordered. Residues 492–606 (CTLILTEGDS…SLLKIPEFLI (115 aa)) enclose the Toprim domain. The Mg(2+) site is built by E498, D575, and D577. Residues 743–1190 (IPSVVDGLKP…SKEDIWKRDL (448 aa)) enclose the Topo IIA-type catalytic domain. The O-(5'-phospho-DNA)-tyrosine intermediate role is filled by Y833. The tract at residues 1016-1025 (KLSKTMTTTN) is interaction with DNA. The segment at 1204-1587 (EARRQRKVAN…PRPRRPRRRS (384 aa)) is disordered. Over residues 1271–1280 (LSFLGKSSAK) the composition is skewed to low complexity. Residues 1308–1320 (PKSEPKADPKPKD) show a composition bias toward basic and acidic residues. Acidic residues predominate over residues 1321 to 1334 (EDEDIVMEDSDIEE). Residues 1348-1364 (VKPESEDGQAKIAEAPK) are compositionally biased toward basic and acidic residues. Residues 1365 to 1375 (RGRAAAKPKPK) are compositionally biased toward basic residues. Acidic residues-rich tracts occupy residues 1379–1391 (EDEEDELDDDDFM) and 1419–1430 (SDSDSDNGDDLL). 2 stretches are compositionally biased toward polar residues: residues 1441–1451 (GSTNGASTSDS) and 1466–1475 (GLKTTASKAS). Acidic residues predominate over residues 1512 to 1521 (DNEPEDDDDE). Residues 1524–1542 (KPAAKGKAAAKGKSTAAAA) are compositionally biased toward low complexity. Residues 1558-1568 (PKPPPRLPCPL) are compositionally biased toward pro residues. Basic residues predominate over residues 1571 to 1587 (RRTHRSNPRPRRPRRRS).

Belongs to the type II topoisomerase family. Homodimer. It depends on Mg(2+) as a cofactor. Mn(2+) serves as cofactor. The cofactor is Ca(2+).

Its subcellular location is the nucleus. The enzyme catalyses ATP-dependent breakage, passage and rejoining of double-stranded DNA.. Its function is as follows. Control of topological states of DNA by transient breakage and subsequent rejoining of DNA strands. Topoisomerase II makes double-strand breaks. This is DNA topoisomerase 2 (TOP2) from Penicillium chrysogenum (Penicillium notatum).